Here is a 634-residue protein sequence, read N- to C-terminus: Pescadillo homolog (634 aa).

Positions 321-414 (RLRTLFKGLK…QLLPTNKYFM (94 aa)) constitute a BRCT domain. Disordered stretches follow at residues 437 to 473 (EEKA…EEIE), 491 to 561 (EYKK…RKAE), and 603 to 634 (NIDA…LKMA). Serine 453 is subject to Phosphoserine. Composition is skewed to acidic residues over residues 454–473 (DDDD…EEIE) and 501–527 (VNED…DVEQ). Coiled-coil stretches lie at residues 460 to 546 (SDAE…KVES) and 596 to 629 (LLRK…AAAK). Composition is skewed to basic and acidic residues over residues 528 to 548 (LDDK…ESGK) and 603 to 623 (NIDA…KKAA). Low complexity predominate over residues 624-634 (AEAAAKALKMA).

Belongs to the pescadillo family.

Its subcellular location is the nucleus. The protein localises to the nucleolus. It is found in the nucleoplasm. Required for maturation of ribosomal RNAs and formation of the large ribosomal subunit. This Drosophila willistoni (Fruit fly) protein is Pescadillo homolog.